We begin with the raw amino-acid sequence, 294 residues long: Putative cuticle collagen 145 (294 aa).

Positions 1–30 (MEKILVTFSTGAASIAVLAVLFTVPSLYNT) are cleaved as a signal peptide. Over residues 100–112 (TCPPGPPGPPGQP) the composition is skewed to pro residues. Disordered regions lie at residues 100–133 (TCPPGPPGPPGQPGAPGTPGAPGPKGDDNTATFA) and 148–276 (PQGP…LPGN). Triple-helical region stretches follow at residues 102–127 (PPGPPGPPGQPGAPGTPGAPGPKGDD) and 148–277 (PQGP…PGND). 2 stretches are compositionally biased toward low complexity: residues 164 to 194 (AGPDGQPGFPGQRGNDGFPGAPGAPGDNGQP) and 219 to 265 (APGA…DGQP). The region spanning 218-276 (GAPGAPGNAGPAGPAGQDGFPGQDGAPGPAGPAGQDGFPGNAGSDGQPGAPGGPGLPGN) is the Collagen-like domain.

This sequence belongs to the cuticular collagen family. In terms of assembly, collagen polypeptide chains are complexed within the cuticle by disulfide bonds and other types of covalent cross-links.

In terms of biological role, nematode cuticles are composed largely of collagen-like proteins. The cuticle functions both as an exoskeleton and as a barrier to protect the worm from its environment. The chain is Putative cuticle collagen 145 (col-145) from Caenorhabditis elegans.